The chain runs to 301 residues: Probable alpha-L-glutamate ligase (301 aa).

In terms of domain architecture, ATP-grasp spans 104 to 287 (LQLLSRKGIG…VAGMIIQYLE (184 aa)). ATP-binding positions include lysine 141, 178–179 (EY), aspartate 187, and 211–213 (RSN). Mg(2+)-binding residues include aspartate 248, glutamate 260, and asparagine 262. The Mn(2+) site is built by aspartate 248, glutamate 260, and asparagine 262.

This sequence belongs to the RimK family. Requires Mg(2+) as cofactor. Mn(2+) is required as a cofactor.

The sequence is that of Probable alpha-L-glutamate ligase from Ectopseudomonas mendocina (strain ymp) (Pseudomonas mendocina).